A 342-amino-acid polypeptide reads, in one-letter code: UDP-N-acetylglucosamine--N-acetylmuramyl-(pentapeptide) pyrophosphoryl-undecaprenol N-acetylglucosamine transferase (342 aa).

UDP-N-acetyl-alpha-D-glucosamine contacts are provided by residues Thr10–Gly12, Asn124, Ser177, and Gln275.

It belongs to the glycosyltransferase 28 family. MurG subfamily.

It is found in the cell inner membrane. The enzyme catalyses di-trans,octa-cis-undecaprenyl diphospho-N-acetyl-alpha-D-muramoyl-L-alanyl-D-glutamyl-meso-2,6-diaminopimeloyl-D-alanyl-D-alanine + UDP-N-acetyl-alpha-D-glucosamine = di-trans,octa-cis-undecaprenyl diphospho-[N-acetyl-alpha-D-glucosaminyl-(1-&gt;4)]-N-acetyl-alpha-D-muramoyl-L-alanyl-D-glutamyl-meso-2,6-diaminopimeloyl-D-alanyl-D-alanine + UDP + H(+). It functions in the pathway cell wall biogenesis; peptidoglycan biosynthesis. Its function is as follows. Cell wall formation. Catalyzes the transfer of a GlcNAc subunit on undecaprenyl-pyrophosphoryl-MurNAc-pentapeptide (lipid intermediate I) to form undecaprenyl-pyrophosphoryl-MurNAc-(pentapeptide)GlcNAc (lipid intermediate II). The chain is UDP-N-acetylglucosamine--N-acetylmuramyl-(pentapeptide) pyrophosphoryl-undecaprenol N-acetylglucosamine transferase from Campylobacter jejuni subsp. jejuni serotype O:2 (strain ATCC 700819 / NCTC 11168).